The chain runs to 243 residues: Sugar fermentation stimulation protein homolog (243 aa).

Belongs to the SfsA family.

The protein is Sugar fermentation stimulation protein homolog of Acaryochloris marina (strain MBIC 11017).